A 476-amino-acid polypeptide reads, in one-letter code: Cytochrome c oxidase subunit 1 (476 aa).

The chain crosses the membrane as a helical span at residues 19–39 (LYYLWFSFLFGTYGFLLSVIL). E42 is a Ca(2+) binding site. The next 8 helical transmembrane spans lie at 61–81 (MIFT…GLFG), 105–125 (ISLL…AAEF), 144–164 (LSPV…IASI), 194–214 (IIIT…GVLM), 240–260 (LFWF…FGVI), 278–298 (MILA…HHMY), 309–329 (FFTS…FNWL), and 345–365 (LLCL…VILG). H66 contacts Fe(II)-heme a. Residue H246 coordinates Cu cation. The segment at residues 246-250 (HPEVY) is a cross-link (1'-histidyl-3'-tyrosine (His-Tyr)). An O2-binding site is contributed by Y250. Residues H295 and H296 each contribute to the Cu cation site. Positions 374 and 375 each coordinate Mg(2+). 2 helical membrane-spanning segments follow: residues 379-399 (VIAH…FTCV) and 415-435 (TLIV…FLPM). Heme a3 is bound at residue H382. H384 contacts Fe(II)-heme a. P448 contributes to the Ca(2+) binding site. A helical transmembrane segment spans residues 455–475 (NGWNMICSIGSTMTLFGLLIF).

It belongs to the heme-copper respiratory oxidase family. In terms of assembly, component of the cytochrome c oxidase (complex IV, CIV), a multisubunit enzyme composed of a catalytic core of 3 subunits and several supernumerary subunits. The complex exists as a monomer or a dimer and forms supercomplexes (SCs) in the inner mitochondrial membrane with ubiquinol-cytochrome c oxidoreductase (cytochrome b-c1 complex, complex III, CIII). It depends on heme as a cofactor. Cu cation serves as cofactor.

It localises to the mitochondrion inner membrane. The enzyme catalyses 4 Fe(II)-[cytochrome c] + O2 + 8 H(+)(in) = 4 Fe(III)-[cytochrome c] + 2 H2O + 4 H(+)(out). It participates in energy metabolism; oxidative phosphorylation. Functionally, component of the cytochrome c oxidase, the last enzyme in the mitochondrial electron transport chain which drives oxidative phosphorylation. The respiratory chain contains 3 multisubunit complexes succinate dehydrogenase (complex II, CII), ubiquinol-cytochrome c oxidoreductase (cytochrome b-c1 complex, complex III, CIII) and cytochrome c oxidase (complex IV, CIV), that cooperate to transfer electrons derived from NADH and succinate to molecular oxygen, creating an electrochemical gradient over the inner membrane that drives transmembrane transport and the ATP synthase. Cytochrome c oxidase is the component of the respiratory chain that catalyzes the reduction of oxygen to water. Electrons originating from reduced cytochrome c in the intermembrane space (IMS) are transferred via the dinuclear copper A center (CU(A)) of subunit 2 and heme A of subunit 1 to the active site in subunit 1, a binuclear center (BNC) formed by heme A3 and copper B (CU(B)). The BNC reduces molecular oxygen to 2 water molecules using 4 electrons from cytochrome c in the IMS and 4 protons from the mitochondrial matrix. The polypeptide is Cytochrome c oxidase subunit 1 (COI) (Plasmodium berghei).